The following is a 672-amino-acid chain: MDKQAAERRIQELHKEINRHNYLYYVEDRPEINDAEYDLLLRELQQLEKAYPDLVTADSPTQRVGAAPLEKFSQVTHRMPMLSLENAFNEEEMHDFDERIKRFLGLAAGDEIEYVCEPKMDGLAVELVYENGDFTVGSTRGDGYVGEDVTQNLRTVKTIPLSLAIATPPRLFEVRGEVYLGLAPFQKLNVEREEAGDPPFANPRNAAAGSLRQLDSRITARRPLSIFCYAAGSLEGHEFTSQSDLLNTIPGWGLPVNPLIRKVSGIGGVLAYYHEMSEKRESLPYEIDGVVVKVDSFDLQRELGEKTRSPRWAIAWKFPPRQAVTVVEEIVPQVGRTGVITPVAHLRPVEVSGVMVSRATLHNWEEMEKKDIRKGDTVVVERAGDVIPAVVKVITEKRKGDEQPLPIPANCPECGSEVVKIPGEVAVRCLGLSCPAQIRETIIHFASRHAMDIDGMGDKYIEQLLKLGLVKNVADLYYLKKDDFMRFERMGDKLAENLLGAIETSKQRELSRFIYALGIRHVGEHTAKLLANAFGSMENLEHASEEELLSIREVGPQVAQSIRTFFHNRNNIEVIDRMFNAGVKPSVEEKRVGGRFTGKTFVFTGALTRFTRDDAKRMVENEGGHAAGSVSKKTDFVVAGAEAGSKLDKARQLGVKVLTEDEFLAMLGVCRT.

Residues 34–38 (DAEYD), 83–84 (SL), and Glu117 contribute to the NAD(+) site. Lys119 (N6-AMP-lysine intermediate) is an active-site residue. The NAD(+) site is built by Arg140, Glu177, Lys293, and Lys317. Zn(2+)-binding residues include Cys411, Cys414, Cys429, and Cys434. One can recognise a BRCT domain in the interval 591 to 672 (RVGGRFTGKT…FLAMLGVCRT (82 aa)).

The protein belongs to the NAD-dependent DNA ligase family. LigA subfamily. Mg(2+) is required as a cofactor. The cofactor is Mn(2+).

It catalyses the reaction NAD(+) + (deoxyribonucleotide)n-3'-hydroxyl + 5'-phospho-(deoxyribonucleotide)m = (deoxyribonucleotide)n+m + AMP + beta-nicotinamide D-nucleotide.. In terms of biological role, DNA ligase that catalyzes the formation of phosphodiester linkages between 5'-phosphoryl and 3'-hydroxyl groups in double-stranded DNA using NAD as a coenzyme and as the energy source for the reaction. It is essential for DNA replication and repair of damaged DNA. In Geotalea uraniireducens (strain Rf4) (Geobacter uraniireducens), this protein is DNA ligase.